The primary structure comprises 238 residues: 4-hydroxy-tetrahydrodipicolinate reductase (238 aa).

12–17 is an NAD(+) binding site; that stretch reads GASGRM. An NADP(+)-binding site is contributed by Arg40. NAD(+)-binding positions include 93 to 95 and 117 to 120; these read GTT and ASNF. His149 acts as the Proton donor/acceptor in catalysis. (S)-2,3,4,5-tetrahydrodipicolinate is bound at residue His150. Lys153 (proton donor) is an active-site residue. 159 to 160 contacts (S)-2,3,4,5-tetrahydrodipicolinate; the sequence is GT.

Belongs to the DapB family.

The protein resides in the cytoplasm. It catalyses the reaction (S)-2,3,4,5-tetrahydrodipicolinate + NAD(+) + H2O = (2S,4S)-4-hydroxy-2,3,4,5-tetrahydrodipicolinate + NADH + H(+). It carries out the reaction (S)-2,3,4,5-tetrahydrodipicolinate + NADP(+) + H2O = (2S,4S)-4-hydroxy-2,3,4,5-tetrahydrodipicolinate + NADPH + H(+). It functions in the pathway amino-acid biosynthesis; L-lysine biosynthesis via DAP pathway; (S)-tetrahydrodipicolinate from L-aspartate: step 4/4. Functionally, catalyzes the conversion of 4-hydroxy-tetrahydrodipicolinate (HTPA) to tetrahydrodipicolinate. In Xanthomonas campestris pv. campestris (strain 8004), this protein is 4-hydroxy-tetrahydrodipicolinate reductase.